Consider the following 105-residue polypeptide: MRTFALFIATALAEIVGCYLPYLWLKQGRSAWLLVPAAASLALFAWLLTLHETAAGRVYAAYGGVYIGVALLWLWIVDGIRPTAWDVAGVAVALTGMGLIMFQPR.

The next 4 helical transmembrane spans lie at Phe-4–Trp-24, Ser-30–Leu-50, Ala-60–Ile-80, and Pro-82–Phe-102.

It belongs to the UPF0060 family.

The protein resides in the cell inner membrane. The sequence is that of UPF0060 membrane protein Ajs_1326 from Acidovorax sp. (strain JS42).